Consider the following 126-residue polypeptide: MARVKRAVNAQKKRREVLEAASGYRGQRSRLYRKAKEQMLHSMTYSYRDRRARKGDFRQLWITRINAAARANGLTYNRFVQGLRLAGVEVDRKILADLAVNDAAAFAALVEVARAALPAAAETSAA.

It belongs to the bacterial ribosomal protein bL20 family.

In terms of biological role, binds directly to 23S ribosomal RNA and is necessary for the in vitro assembly process of the 50S ribosomal subunit. It is not involved in the protein synthesizing functions of that subunit. In Parafrankia sp. (strain EAN1pec), this protein is Large ribosomal subunit protein bL20.